The following is a 135-amino-acid chain: Large ribosomal subunit protein uL18 (135 aa).

Residues methionine 1–arginine 23 form a disordered region.

This sequence belongs to the universal ribosomal protein uL18 family. In terms of assembly, part of the 50S ribosomal subunit; part of the 5S rRNA/L5/L18/L25 subcomplex. Contacts the 5S and 23S rRNAs.

Functionally, this is one of the proteins that bind and probably mediate the attachment of the 5S RNA into the large ribosomal subunit, where it forms part of the central protuberance. The chain is Large ribosomal subunit protein uL18 from Rhodococcus jostii (strain RHA1).